The chain runs to 655 residues: MTDPLVPAVLAFRDNGTPYSPLYDDIYHSAVGGLAQADYVFLKGNDLPSRWQKRRLFTVLETGFGMGINFLVTWAAWRADPDRCERLHFVSTEKHPFSREDLIAATNSSVADASIAALAEQLANAWPTLVPGTHRLEFEEGRVILTLVFGDAVQTLPTLWLRADAFYLDGFSPDRNPDLWTPAVFKSLARLAGDEATFATYTSSGDVKRSLQQAGFEYRKVDGFGWKRAMLVGRFAPRYRVRRHEPPLPLAVGERHAIVIGTGLAGCAAIERLTARGWRVTSLERHADVARDASGNPAGVFHPMMSRDDSVGSRITRAGFLYALRQWSALEHRGHRPLRGPEGLLQIAADEEEALAMAHTFASFAWPREYVVSVTRDDAERIANMRVARGGWLFPHGGWIDPASLCAAQCEAAGGLLERRFNVAAARVERLENQWIVFDENGAAVVSAPVVIFANAHEAARVAGLHYASTRSVRGQLTLLPADATNAPRLPVIGEGYALPLLDGVTLTGATYDIDDPDTRLRDGAHIENIERVAQMLPDMRDAFNVHAPSSLTGRVAFRCVTSDRLPMIGAFADEAAAIRDAGKLCGAWPLDLPRADGLYGAFAFGSRGLVWASLGAELMASQIEGEPWPIERDLAEALDPARFLLRALRQGTAS.

Positions 1–236 (MTDPLVPAVL…KRAMLVGRFA (236 aa)) are tRNA (mnm(5)s(2)U34)-methyltransferase. The segment at 260–655 (IGTGLAGCAA…LRALRQGTAS (396 aa)) is FAD-dependent cmnm(5)s(2)U34 oxidoreductase.

In the N-terminal section; belongs to the methyltransferase superfamily. tRNA (mnm(5)s(2)U34)-methyltransferase family. The protein in the C-terminal section; belongs to the DAO family. FAD serves as cofactor.

The protein localises to the cytoplasm. The catalysed reaction is 5-aminomethyl-2-thiouridine(34) in tRNA + S-adenosyl-L-methionine = 5-methylaminomethyl-2-thiouridine(34) in tRNA + S-adenosyl-L-homocysteine + H(+). Functionally, catalyzes the last two steps in the biosynthesis of 5-methylaminomethyl-2-thiouridine (mnm(5)s(2)U) at the wobble position (U34) in tRNA. Catalyzes the FAD-dependent demodification of cmnm(5)s(2)U34 to nm(5)s(2)U34, followed by the transfer of a methyl group from S-adenosyl-L-methionine to nm(5)s(2)U34, to form mnm(5)s(2)U34. This is tRNA 5-methylaminomethyl-2-thiouridine biosynthesis bifunctional protein MnmC from Paraburkholderia phymatum (strain DSM 17167 / CIP 108236 / LMG 21445 / STM815) (Burkholderia phymatum).